We begin with the raw amino-acid sequence, 454 residues long: uncharacterized protein (454 aa).

Residue Gly125–Thr132 participates in ATP binding.

The protein belongs to the AFG1 ATPase family.

This is an uncharacterized protein from Schizosaccharomyces pombe (strain 972 / ATCC 24843) (Fission yeast).